A 384-amino-acid polypeptide reads, in one-letter code: L-cysteine:1D-myo-inositol 2-amino-2-deoxy-alpha-D-glucopyranoside ligase (384 aa).

Cys-16 provides a ligand contact to Zn(2+). Residues 16–19 (CGIT), Thr-31, and 54–56 (NVT) each bind L-cysteinyl-5'-AMP. A 'HIGH' region motif is present at residues 18 to 28 (ITPYDATHLGH). A 'ERGGDP' region motif is present at residues 159-164 (QSGGDP). L-cysteinyl-5'-AMP is bound at residue Trp-199. Cys-203 provides a ligand contact to Zn(2+). 221–223 (GSD) is an L-cysteinyl-5'-AMP binding site. His-228 contributes to the Zn(2+) binding site. Residue Ile-255 participates in L-cysteinyl-5'-AMP binding. The 'KMSKS' region motif lies at 261-265 (KMSKS).

Belongs to the class-I aminoacyl-tRNA synthetase family. MshC subfamily. Monomer. It depends on Zn(2+) as a cofactor.

The catalysed reaction is 1D-myo-inositol 2-amino-2-deoxy-alpha-D-glucopyranoside + L-cysteine + ATP = 1D-myo-inositol 2-(L-cysteinylamino)-2-deoxy-alpha-D-glucopyranoside + AMP + diphosphate + H(+). Its function is as follows. Catalyzes the ATP-dependent condensation of GlcN-Ins and L-cysteine to form L-Cys-GlcN-Ins. The polypeptide is L-cysteine:1D-myo-inositol 2-amino-2-deoxy-alpha-D-glucopyranoside ligase (Mycobacterium leprae (strain Br4923)).